The chain runs to 418 residues: Glutamyl-tRNA reductase (418 aa).

Substrate is bound by residues 49-52 (TCNR), serine 109, 114-116 (EPQ), and glutamine 120. The active-site Nucleophile is cysteine 50. 189 to 194 (GAGETI) is a binding site for NADP(+).

Belongs to the glutamyl-tRNA reductase family. Homodimer.

It catalyses the reaction (S)-4-amino-5-oxopentanoate + tRNA(Glu) + NADP(+) = L-glutamyl-tRNA(Glu) + NADPH + H(+). The protein operates within porphyrin-containing compound metabolism; protoporphyrin-IX biosynthesis; 5-aminolevulinate from L-glutamyl-tRNA(Glu): step 1/2. Catalyzes the NADPH-dependent reduction of glutamyl-tRNA(Glu) to glutamate 1-semialdehyde (GSA). The chain is Glutamyl-tRNA reductase from Klebsiella pneumoniae subsp. pneumoniae (strain ATCC 700721 / MGH 78578).